Consider the following 404-residue polypeptide: 6-hydroxytryptophan 2,3-dioxygenase fscD (404 aa).

His-341 contributes to the heme b binding site.

Belongs to the indoleamine 2,3-dioxygenase family. Heme is required as a cofactor.

It participates in secondary metabolite biosynthesis. In terms of biological role, 6-hydroxytryptophan 2,3-dioxygenase; part of the fragmented gene cluster that mediates the biosynthesis of fusarochromene, a tryptophan-derived metabolite closely related to a group of mycotoxins including fusarochromanone. Within the pathway, fscD is responsible of the cleavage of the pyrrole ring of 6-hydroxytryptophan. The first step of the pathway is the epimerization of L-tryptophan to D-tryptophan in the presence of the NRPS-like tryptophan epimerase fscC. D-tryptophan is subsequently hydroxylated by the tryptophan 6-hydroxylase fscE to yield 6-hydroxytryptophan. The pyrrole ring undergoes cleavaged by the tryptophan 2,3-dioxygenase fscD and is finally converted to 4-hydroxykyrunenine by the hydrolase fscH. The NRPS-like oxidoreductase fscA reduces the carboxyl group to primary alcohol and the DMATS-type prenyltransferase fscG performs prenylation, followed by the formation of a chromene ring catalyzed by the oxidoreductase fscI, which leads to desacetylfusarochromene. Epoxidation by fscF and rearrangement reactions of chromene double bonds convert compound desacetylfusarochromene to fusarochromanones. Although specific acetyltransferases were not found near the fsc gene cluster, several predicted enzymes containing the N-acetyltransferase superfamily domain are present in the genome of F.equiseti. These predicted enzymes may have the potential to convert desacetylfusarochromene to fusarochromene. This Fusarium equiseti (Fusarium scirpi) protein is 6-hydroxytryptophan 2,3-dioxygenase fscD.